The following is a 276-amino-acid chain: Diaminopimelate epimerase (276 aa).

The substrate site is built by N13, Q46, and N66. C75 acts as the Proton donor in catalysis. Substrate contacts are provided by residues 76–77, N159, N192, and 210–211; these read GN and ER. C219 (proton acceptor) is an active-site residue. 220–221 lines the substrate pocket; that stretch reads GT.

It belongs to the diaminopimelate epimerase family. As to quaternary structure, homodimer.

Its subcellular location is the cytoplasm. It carries out the reaction (2S,6S)-2,6-diaminopimelate = meso-2,6-diaminopimelate. The protein operates within amino-acid biosynthesis; L-lysine biosynthesis via DAP pathway; DL-2,6-diaminopimelate from LL-2,6-diaminopimelate: step 1/1. Its function is as follows. Catalyzes the stereoinversion of LL-2,6-diaminopimelate (L,L-DAP) to meso-diaminopimelate (meso-DAP), a precursor of L-lysine and an essential component of the bacterial peptidoglycan. The chain is Diaminopimelate epimerase from Pseudomonas fluorescens (strain Pf0-1).